Reading from the N-terminus, the 208-residue chain is uncharacterized protein (208 aa).

A signal peptide spans 1–34 (MPSHCRERLPFALHFFAVAYGASLWILGSHGLAA).

This is an uncharacterized protein from Sinorhizobium fredii (strain NBRC 101917 / NGR234).